A 436-amino-acid chain; its full sequence is GTPase Der (436 aa).

2 consecutive EngA-type G domains span residues 4-167 and 175-351; these read PVVA…PKDA and IKFS…DNHE. GTP contacts are provided by residues 10-17, 57-61, 119-122, 181-188, 229-233, and 294-297; these read GRPNVGKS, DTGGI, NKVD, DTAGI, and NKWD. The region spanning 352-436 is the KH-like domain; it reads QRISSAVLND…PIHIIERRRK (85 aa).

It belongs to the TRAFAC class TrmE-Era-EngA-EngB-Septin-like GTPase superfamily. EngA (Der) GTPase family. As to quaternary structure, associates with the 50S ribosomal subunit.

Its function is as follows. GTPase that plays an essential role in the late steps of ribosome biogenesis. This Ligilactobacillus salivarius (strain UCC118) (Lactobacillus salivarius) protein is GTPase Der.